Here is a 650-residue protein sequence, read N- to C-terminus: MGKIIGIDLGTTNSCVAIMEGNQVKVIENSEGTRTTPSIIAYMDDNEVLVGAPAKRQSVTNPRNTLFAVKRLIGRRFEEKEVQKDIGLMPYAIIKADNGDAWVEAHGEKLAPPQVSAEVLRKMKKTAEDYLGEPVTEAVITVPAYFNDSQRQATKDAGRIAGLEVKRIINEPTAAALAFGLDKAEKGDRKIAVYDLGGGTFDVSIIEIADVDGEMQFEVLSTNGDTFLGGEDFDQRIIDYIIGEFKKEQGVDLSKDVLALQRLKEAAEKAKIELSSSQQTEINLPYITADASGPKHLNLKITRAKLEALVEDLVERTIEPCRIAIKDAGVKVSDIDDVILVGGQTRMPKVQEKVKEFFGKDPRRDVNPDEAVAVGAAIQGQVLSGDRKDVLLLDVTPLSLGIETLGGVMTKMISKNTTIPTKHAQVYSTADDNQSAVTIKVFQGEREMAAGNKLLGEFNLEGIPPSPRGVPQIEVTFDIDANGILHVGAKDKATGKENKITIKANSGLTDAEIDQMIKDAEANAAEDHKLRELADSRNQGDALVHSTKKALTEYGDKLDAGEKEKIEAALKSLEDALKDTSADKATIDAKVEELGQVSQKLGEKMYADMQAQQAGAAGAAGAAEGAAHAGGAQQAADDVVDAEFKEVKKD.

Residue T200 is modified to Phosphothreonine; by autocatalysis. Residues 611–636 show a composition bias toward low complexity; sequence AQQAGAAGAAGAAEGAAHAGGAQQAA. Positions 611–637 are disordered; it reads AQQAGAAGAAGAAEGAAHAGGAQQAAD.

This sequence belongs to the heat shock protein 70 family.

Its function is as follows. Acts as a chaperone. This is Chaperone protein DnaK from Burkholderia ambifaria (strain MC40-6).